The chain runs to 173 residues: Pathogenesis-related protein 1A/1B (173 aa).

The N-terminal stretch at 1 to 20 is a signal peptide; it reads MSTSAVLFLLLAVFAAGASA.

Belongs to the thaumatin family.

The sequence is that of Pathogenesis-related protein 1A/1B from Hordeum vulgare (Barley).